A 202-amino-acid chain; its full sequence is CASP-like protein 2B1 (202 aa).

Over 1-29 (MSYLGVGVSPGNVPVYHGTNLKVVDRRVR) the chain is Cytoplasmic. The helical transmembrane segment at 30–50 (LAELVLRCVICGLGILAAVLV) threads the bilayer. Topologically, residues 51-72 (GTDTQVKVIFTIQKKAKFTDMK) are extracellular. A helical membrane pass occupies residues 73-93 (ALVFLVIANGIAAAYSLIQGL). The Cytoplasmic portion of the chain corresponds to 94–109 (RCVVSMVRGSVLFSKP). Residues 110 to 130 (LAWAIFSGDQVIAYLTLAAVA) form a helical membrane-spanning segment. Topologically, residues 131–164 (AAAQSSVFGEFGQPELQWMKICNMYGKFCNQVGE) are extracellular. A helical transmembrane segment spans residues 165–185 (GIVSAVGVSLSMVILSGISAF). Residues 186 to 202 (SLFRLYGGNKGTSGGRW) are Cytoplasmic-facing.

Belongs to the Casparian strip membrane proteins (CASP) family. In terms of assembly, homodimer and heterodimers.

The protein localises to the cell membrane. The sequence is that of CASP-like protein 2B1 from Vitis vinifera (Grape).